Consider the following 147-residue polypeptide: Large ribosomal subunit protein uL16c (147 aa).

The segment covering 1–17 (MLSPKRTRFRKQHRGRM) has biased composition (basic residues). Residues 1 to 20 (MLSPKRTRFRKQHRGRMKGI) are disordered.

This sequence belongs to the universal ribosomal protein uL16 family. In terms of assembly, part of the 50S ribosomal subunit.

It localises to the plastid. The protein localises to the chloroplast. The polypeptide is Large ribosomal subunit protein uL16c (Ipomoea purpurea (Common morning glory)).